The primary structure comprises 255 residues: 5'-nucleotidase SurE (255 aa).

Asp7, Asp8, Ser38, and Asn90 together coordinate a divalent metal cation.

The protein belongs to the SurE nucleotidase family. A divalent metal cation is required as a cofactor.

Its subcellular location is the cytoplasm. The enzyme catalyses a ribonucleoside 5'-phosphate + H2O = a ribonucleoside + phosphate. Functionally, nucleotidase that shows phosphatase activity on nucleoside 5'-monophosphates. The sequence is that of 5'-nucleotidase SurE from Picrophilus torridus (strain ATCC 700027 / DSM 9790 / JCM 10055 / NBRC 100828 / KAW 2/3).